The primary structure comprises 129 residues: Small ribosomal subunit protein bS6 (129 aa).

The segment at leucine 103–glutamate 129 is disordered. Residues lysine 104–glutamate 129 are compositionally biased toward basic and acidic residues.

The protein belongs to the bacterial ribosomal protein bS6 family.

In terms of biological role, binds together with bS18 to 16S ribosomal RNA. This chain is Small ribosomal subunit protein bS6, found in Vibrio campbellii (strain ATCC BAA-1116).